The following is a 390-amino-acid chain: 23S rRNA (uracil(747)-C(5))-methyltransferase RlmC (390 aa).

[4Fe-4S] cluster is bound by residues Cys-12, Cys-20, Cys-23, and Cys-100. Residues Gln-225, Phe-254, Glu-275, and Asn-322 each coordinate S-adenosyl-L-methionine. The Nucleophile role is filled by Cys-349.

Belongs to the class I-like SAM-binding methyltransferase superfamily. RNA M5U methyltransferase family. RlmC subfamily.

It catalyses the reaction uridine(747) in 23S rRNA + S-adenosyl-L-methionine = 5-methyluridine(747) in 23S rRNA + S-adenosyl-L-homocysteine + H(+). Functionally, catalyzes the formation of 5-methyl-uridine at position 747 (m5U747) in 23S rRNA. The chain is 23S rRNA (uracil(747)-C(5))-methyltransferase RlmC from Shewanella baltica (strain OS223).